Consider the following 363-residue polypeptide: MKDNFSFAATSRNITSSLPFDNLNATGTNESAFNCSHKPADKHLEAIPVLYYMIFVIGFAVNIVVVSLFCCQKGPKKVSSIYIFNLAVADLLLLATLPLWATYYSYRYDWLFGPVMCKVFGSFLTLNMFASIFFITCMSVDRYQSVIYPFLSQRRNPWQASYVVPLVWCMACLSSLPTFYFRDVRTIEYLGVNACIMAFPPEKYAQWSAGIALMKNILGFIIPLIFIATCYFGIRKHLLKTNSYGKNRITRDQVLKMAAAVVLAFIICWLPFHVLTFLDALTWMGIINSCEVIAVIDLALPFAILLGFTNSCVNPFLYCFVGNRFQQKLRSVFRVPITWLQGKRETMSCRKSSSLREMDTFVS.

Topologically, residues 1–45 (MKDNFSFAATSRNITSSLPFDNLNATGTNESAFNCSHKPADKHLE) are extracellular. Residues asparagine 4, asparagine 13, asparagine 24, asparagine 29, and asparagine 34 are each glycosylated (N-linked (GlcNAc...) asparagine). 2 disulfides stabilise this stretch: cysteine 35–cysteine 290 and cysteine 117–cysteine 195. The helical transmembrane segment at 46-70 (AIPVLYYMIFVIGFAVNIVVVSLFC) threads the bilayer. Topologically, residues 71–80 (CQKGPKKVSS) are cytoplasmic. Residues 81 to 104 (IYIFNLAVADLLLLATLPLWATYY) form a helical membrane-spanning segment. Angiotensin II-binding residues include tyrosine 103 and tyrosine 104. At 105–114 (SYRYDWLFGP) the chain is on the extracellular side. The helical transmembrane segment at 115 to 140 (VMCKVFGSFLTLNMFASIFFITCMSV) threads the bilayer. Over 141–159 (DRYQSVIYPFLSQRRNPWQ) the chain is Cytoplasmic. The helical transmembrane segment at 160 to 181 (ASYVVPLVWCMACLSSLPTFYF) threads the bilayer. 3 residues coordinate angiotensin II: arginine 182, tyrosine 204, and lysine 215. Topologically, residues 182–206 (RDVRTIEYLGVNACIMAFPPEKYAQ) are extracellular. A helical membrane pass occupies residues 207–232 (WSAGIALMKNILGFIIPLIFIATCYF). The Cytoplasmic portion of the chain corresponds to 233 to 257 (GIRKHLLKTNSYGKNRITRDQVLKM). A helical transmembrane segment spans residues 258–281 (AAAVVLAFIICWLPFHVLTFLDAL). An angiotensin II-binding site is contributed by aspartate 279. Residues 282–294 (TWMGIINSCEVIA) are Extracellular-facing. The helical transmembrane segment at 295 to 320 (VIDLALPFAILLGFTNSCVNPFLYCF) threads the bilayer. Aspartate 297 lines the angiotensin II pocket. Over 321–363 (VGNRFQQKLRSVFRVPITWLQGKRETMSCRKSSSLREMDTFVS) the chain is Cytoplasmic. Residues 324 to 333 (RFQQKLRSVF) form a helix VIII region. A Phosphoserine; by PKC modification is found at serine 354.

Belongs to the G-protein coupled receptor 1 family. Interacts with MTUS1. In terms of tissue distribution, abundant expression in fetal tissues, immature brain, skin wound and atretic ovarian follicles.

The protein localises to the cell membrane. In terms of biological role, receptor for angiotensin II, a vasoconstricting peptide. Signals primarily via a non-canonical G-protein- and beta-arrestin independent pathways. Cooperates with MTUS1 to inhibit ERK2 activation and cell proliferation. The polypeptide is Type-2 angiotensin II receptor (Rattus norvegicus (Rat)).